The chain runs to 341 residues: Phosphoribosylformylglycinamidine cyclo-ligase (341 aa).

Belongs to the AIR synthase family.

The protein resides in the cytoplasm. The catalysed reaction is 2-formamido-N(1)-(5-O-phospho-beta-D-ribosyl)acetamidine + ATP = 5-amino-1-(5-phospho-beta-D-ribosyl)imidazole + ADP + phosphate + H(+). The protein operates within purine metabolism; IMP biosynthesis via de novo pathway; 5-amino-1-(5-phospho-D-ribosyl)imidazole from N(2)-formyl-N(1)-(5-phospho-D-ribosyl)glycinamide: step 2/2. The polypeptide is Phosphoribosylformylglycinamidine cyclo-ligase (Xanthomonas euvesicatoria pv. vesicatoria (strain 85-10) (Xanthomonas campestris pv. vesicatoria)).